A 2541-amino-acid chain; its full sequence is Highly reducing polyketide synthase otaA (2541 aa).

Residues 9-431 enclose the Ketosynthase family 3 (KS3) domain; the sequence is SEPLAIIGLA…GTNAHVVLED (423 aa). Residues Cys182, His317, and His355 each act as for beta-ketoacyl synthase activity in the active site. The region spanning 571–888 is the Malonyl-CoA:ACP transacylase (MAT) domain; it reads FIFTGQGANW…GSLLKRYETD (318 aa). An N-terminal hotdog fold region spans residues 957 to 1092; that stretch reads HELLGVPVED…GSVRVETGPH (136 aa). The tract at residues 957–1251 is dehydratase (DH) domain; it reads HELLGVPVED…GLDLVQLPPS (295 aa). Positions 957-1254 constitute a PKS/mFAS DH domain; it reads HELLGVPVED…LVQLPPSEDA (298 aa). Residues 1108–1254 form a C-terminal hotdog fold region; sequence TESVDIAQMY…LVQLPPSEDA (147 aa). S-adenosyl-L-methionine contacts are provided by Ile1420 and Glu1442. Residues 1433–1605 are methyltransferase (CMeT) domain; the sequence is HAQTGIKVLE…DQELRNAGLQ (173 aa). In terms of domain architecture, Enoyl reductase (ER) spans 1838 to 2141; the sequence is HQPNGFHFVE…RQGNAGPWVL (304 aa). One can recognise a Ketoreductase (KR) domain in the interval 2165 to 2344; it reads ASYLLIGGFG…PATSISLGSV (180 aa). One can recognise a Carrier domain in the interval 2453 to 2530; that stretch reads DAVELVTRAI…QLAQQAAGGS (78 aa). Position 2490 is an O-(pantetheine 4'-phosphoryl)serine (Ser2490).

Pantetheine 4'-phosphate is required as a cofactor.

It carries out the reaction 4 malonyl-CoA + acetyl-CoA + 5 NADPH + 9 H(+) = 7-methylmellein + 3 CO2 + 5 NADP(+) + 5 CoA + 4 H2O. Its pathway is mycotoxin biosynthesis. In terms of biological role, highly reducing polyketide synthase; part of the gene cluster that mediates the biosynthesis of ochratoxin A (OTA), a mycotoxin composed of a chlorinated type I polyketide dihydroisocoumarin moiety linked to L-phenylalanine, and demonstrated to have nephrotoxic, immunotoxic, genotoxic, neurotoxic, and teratogenic properties. OtaA catalyzes the condensation of one acetate and 4 malonate units to form the isocoumarin group. The pathway begins with the highly reducing polyketide synthase otaA that catalyzes the formation of the isocoumarin group during the initial stages of biosynthesis, starting from one acetate and 4 malonate units, to originate the characteristic pentaketide skeleton 7-methylmellein (7-MM) of the OTA molecule. The newly identified cyclase otaY might be involved in the polyketide cyclization reaction during the initial steps of the OTA biosynthesis. 7-MM is then oxidized into 7-carboxymellein (also called ochratoxin beta) by the cytochrome P450 monooxygenase otaC. The NRPS encoded by the otaB gene is involved in the linking of phenylalanine to the dihydroisocoumarin ring. The reaction catalyzed by NRPS results in the production of ochratoxin B (OTB), which is the non-chlorinated analog of OTA and which subsequently serves as the substrate of the halogenase otaD for chlorination activity to form the final molecular structure of OTA, containing a chlorine atom in the C-5 position of the molecule. The protein is Highly reducing polyketide synthase otaA of Aspergillus carbonarius (strain ITEM 5010).